The sequence spans 316 residues: Beta-ketoacyl-[acyl-carrier-protein] synthase III 4 (316 aa).

Catalysis depends on residues Cys114 and His242. Residues 243–247 form an ACP-binding region; that stretch reads QANLR. The active site involves Asn272.

The protein belongs to the thiolase-like superfamily. FabH family. In terms of assembly, homodimer.

The protein localises to the cytoplasm. The enzyme catalyses malonyl-[ACP] + acetyl-CoA + H(+) = 3-oxobutanoyl-[ACP] + CO2 + CoA. It participates in lipid metabolism; fatty acid biosynthesis. In terms of biological role, catalyzes the condensation reaction of fatty acid synthesis by the addition to an acyl acceptor of two carbons from malonyl-ACP. Catalyzes the first condensation reaction which initiates fatty acid synthesis and may therefore play a role in governing the total rate of fatty acid production. Possesses both acetoacetyl-ACP synthase and acetyl transacylase activities. Its substrate specificity determines the biosynthesis of branched-chain and/or straight-chain of fatty acids. This is Beta-ketoacyl-[acyl-carrier-protein] synthase III 4 from Streptomyces coelicolor (strain ATCC BAA-471 / A3(2) / M145).